The sequence spans 196 residues: Putative NADH dehydrogenase/NAD(P)H nitroreductase SCO5049 (196 aa).

Belongs to the nitroreductase family. HadB/RutE subfamily. It depends on FMN as a cofactor.

This chain is Putative NADH dehydrogenase/NAD(P)H nitroreductase SCO5049, found in Streptomyces coelicolor (strain ATCC BAA-471 / A3(2) / M145).